We begin with the raw amino-acid sequence, 352 residues long: Probable cytosolic iron-sulfur protein assembly protein CIAO1 homolog (352 aa).

WD repeat units lie at residues 14–53, 63–102, 107–146, 152–191, 200–240, 268–306, and 319–352; these read GHDD…PSEQ, CHTR…WEQV, GHEN…EFEC, GHSQ…WGCA, GHES…TSTP, HHRR…LTQP, and AHGA…WWLR.

It belongs to the WD repeat CIA1 family.

Essential component of the cytosolic iron-sulfur (Fe/S) protein assembly machinery. Required for the maturation of extramitochondrial Fe/S proteins. This chain is Probable cytosolic iron-sulfur protein assembly protein CIAO1 homolog, found in Chlamydomonas reinhardtii (Chlamydomonas smithii).